A 286-amino-acid chain; its full sequence is MTITFNAIQDLQQALHPLRTDKKIALVPTMGNLHDGHISLVKLAQEHADVVVVSIFVNPTQFGVGEDLDSYPRTLEADTQKLTEAGVDYIFAPSVEEMYPVMPPPTQVLAGAISQYLCGKSRPTHFDGVGIVVTKLFNIVQPNVAVFGKKDYQQLAIIKQLVRDLSYNIEIIGAPLVRAVDGLALSSRNQYLTETERQIAPMLNQHLSKLAQKLKNTPIANNQQLQALIEDTIAQINNAGFRVDYLEVSNQDLSKITDFYGQKQWVIAVAAWLGKARLLDNQEVNG.

30–37 (MGNLHDGH) contributes to the ATP binding site. His37 acts as the Proton donor in catalysis. Position 61 (Gln61) interacts with (R)-pantoate. Residue Gln61 participates in beta-alanine binding. Residue 148 to 151 (GKKD) coordinates ATP. Gln154 serves as a coordination point for (R)-pantoate. ATP is bound by residues Val177 and 185–188 (LSSR).

This sequence belongs to the pantothenate synthetase family. As to quaternary structure, homodimer.

The protein localises to the cytoplasm. It carries out the reaction (R)-pantoate + beta-alanine + ATP = (R)-pantothenate + AMP + diphosphate + H(+). The protein operates within cofactor biosynthesis; (R)-pantothenate biosynthesis; (R)-pantothenate from (R)-pantoate and beta-alanine: step 1/1. Catalyzes the condensation of pantoate with beta-alanine in an ATP-dependent reaction via a pantoyl-adenylate intermediate. This chain is Pantothenate synthetase, found in Psychrobacter sp. (strain PRwf-1).